The primary structure comprises 471 residues: Ribosomal protein uS12 methylthiotransferase RimO (471 aa).

The MTTase N-terminal domain occupies 23 to 138 (PKIGFVSLGC…VMDAVHVHVP (116 aa)). The [4Fe-4S] cluster site is built by C32, C68, C97, C169, C173, and C176. The region spanning 155–396 (LTPRHYAYLK…MAVAEAVSAE (242 aa)) is the Radical SAM core domain. Residues 399-471 (RERVGAEMQV…QGHDLVGQPL (73 aa)) form the TRAM domain.

The protein belongs to the methylthiotransferase family. RimO subfamily. Requires [4Fe-4S] cluster as cofactor.

It localises to the cytoplasm. The enzyme catalyses L-aspartate(89)-[ribosomal protein uS12]-hydrogen + (sulfur carrier)-SH + AH2 + 2 S-adenosyl-L-methionine = 3-methylsulfanyl-L-aspartate(89)-[ribosomal protein uS12]-hydrogen + (sulfur carrier)-H + 5'-deoxyadenosine + L-methionine + A + S-adenosyl-L-homocysteine + 2 H(+). In terms of biological role, catalyzes the methylthiolation of an aspartic acid residue of ribosomal protein uS12. This Methylibium petroleiphilum (strain ATCC BAA-1232 / LMG 22953 / PM1) protein is Ribosomal protein uS12 methylthiotransferase RimO.